The following is a 133-amino-acid chain: Ribosome-binding factor A (133 aa).

It belongs to the RbfA family. In terms of assembly, monomer. Binds 30S ribosomal subunits, but not 50S ribosomal subunits or 70S ribosomes.

Its subcellular location is the cytoplasm. In terms of biological role, one of several proteins that assist in the late maturation steps of the functional core of the 30S ribosomal subunit. Associates with free 30S ribosomal subunits (but not with 30S subunits that are part of 70S ribosomes or polysomes). Required for efficient processing of 16S rRNA. May interact with the 5'-terminal helix region of 16S rRNA. This is Ribosome-binding factor A from Acinetobacter baumannii (strain ACICU).